We begin with the raw amino-acid sequence, 252 residues long: Coenzyme F420:L-glutamate ligase (252 aa).

GTP is bound by residues 11-14 (MPLV), 45-46 (ET), and Lys-50. Asp-115 contributes to the a divalent metal cation binding site. Asn-118 is a GTP binding site. A divalent metal cation contacts are provided by Asp-156, Thr-157, and Gln-214. Position 212-219 (212-219 (MGQADEGV)) interacts with GTP.

Belongs to the CofE family. As to quaternary structure, homodimer. Mg(2+) serves as cofactor. Requires Mn(2+) as cofactor. It depends on K(+) as a cofactor.

It carries out the reaction oxidized coenzyme F420-0 + GTP + L-glutamate = oxidized coenzyme F420-1 + GDP + phosphate + H(+). The catalysed reaction is oxidized coenzyme F420-1 + GTP + L-glutamate = oxidized coenzyme F420-2 + GDP + phosphate + H(+). Its pathway is cofactor biosynthesis; coenzyme F420 biosynthesis. Its function is as follows. Catalyzes the GTP-dependent successive addition of two or more gamma-linked L-glutamates to the L-lactyl phosphodiester of 7,8-didemethyl-8-hydroxy-5-deazariboflavin (F420-0) to form coenzyme F420-0-glutamyl-glutamate (F420-2) or polyglutamated F420 derivatives. This chain is Coenzyme F420:L-glutamate ligase, found in Methanothermobacter thermautotrophicus (strain ATCC 29096 / DSM 1053 / JCM 10044 / NBRC 100330 / Delta H) (Methanobacterium thermoautotrophicum).